Here is a 138-residue protein sequence, read N- to C-terminus: Cysteine desulfuration protein SufE (138 aa).

Cysteine 51 acts as the Cysteine persulfide intermediate in catalysis.

Belongs to the SufE family. Homodimer. Interacts with SufS.

The protein localises to the cytoplasm. It participates in cofactor biosynthesis; iron-sulfur cluster biosynthesis. Its function is as follows. Participates in cysteine desulfuration mediated by SufS. Cysteine desulfuration mobilizes sulfur from L-cysteine to yield L-alanine and constitutes an essential step in sulfur metabolism for biosynthesis of a variety of sulfur-containing biomolecules. Functions as a sulfur acceptor for SufS, by mediating the direct transfer of the sulfur atom from the S-sulfanylcysteine of SufS, an intermediate product of cysteine desulfuration process. This is Cysteine desulfuration protein SufE from Shigella sonnei (strain Ss046).